The following is a 120-amino-acid chain: Transcription elongation factor SPT4 (120 aa).

Positions 1-39 (MAASIPSDLRNLRACLLCSLIKSVDAFQTDGCENCDEVL) are interaction with spt-5. The segment at 15-35 (CLLCSLIKSVDAFQTDGCENC) adopts a C4-type zinc-finger fold.

It belongs to the SPT4 family. As to quaternary structure, interacts with spt-5 to form DSIF. DSIF interacts with RNA polymerase II and with the positive transcription elongation factor b complex (P-TEFb complex), which is composed of cdk-9 and cyclin-T.

Its subcellular location is the nucleus. Functionally, may function as a component of the DRB sensitivity-inducing factor complex (DSIF complex), which regulates transcription elongation by RNA polymerase II. DSIF may enhance transcriptional pausing at sites proximal to the promoter, which may in turn facilitate the assembly of an elongation competent RNA polymerase II complex. This is Transcription elongation factor SPT4 (spt-4) from Caenorhabditis briggsae.